We begin with the raw amino-acid sequence, 441 residues long: Glutamyl-tRNA reductase (441 aa).

Substrate is bound by residues 47–50, serine 104, 109–111, and glutamine 115; these read TCNR and EAQ. Cysteine 48 serves as the catalytic Nucleophile. 184 to 189 contacts NADP(+); that stretch reads GAGEMG.

Belongs to the glutamyl-tRNA reductase family. As to quaternary structure, homodimer.

It carries out the reaction (S)-4-amino-5-oxopentanoate + tRNA(Glu) + NADP(+) = L-glutamyl-tRNA(Glu) + NADPH + H(+). It participates in porphyrin-containing compound metabolism; protoporphyrin-IX biosynthesis; 5-aminolevulinate from L-glutamyl-tRNA(Glu): step 1/2. Functionally, catalyzes the NADPH-dependent reduction of glutamyl-tRNA(Glu) to glutamate 1-semialdehyde (GSA). The chain is Glutamyl-tRNA reductase from Myxococcus xanthus (strain DK1622).